A 309-amino-acid chain; its full sequence is 4-diphosphocytidyl-2-C-methyl-D-erythritol kinase (309 aa).

Lys-11 is a catalytic residue. 94-104 (PVAAGLAGGSA) serves as a coordination point for ATP. The active site involves Asp-136.

This sequence belongs to the GHMP kinase family. IspE subfamily.

It carries out the reaction 4-CDP-2-C-methyl-D-erythritol + ATP = 4-CDP-2-C-methyl-D-erythritol 2-phosphate + ADP + H(+). The protein operates within isoprenoid biosynthesis; isopentenyl diphosphate biosynthesis via DXP pathway; isopentenyl diphosphate from 1-deoxy-D-xylulose 5-phosphate: step 3/6. In terms of biological role, catalyzes the phosphorylation of the position 2 hydroxy group of 4-diphosphocytidyl-2C-methyl-D-erythritol. This chain is 4-diphosphocytidyl-2-C-methyl-D-erythritol kinase, found in Synechococcus sp. (strain JA-3-3Ab) (Cyanobacteria bacterium Yellowstone A-Prime).